The chain runs to 668 residues: DNA ligase (668 aa).

Residues 34–38 (DTEYD), 83–84 (SL), and glutamate 114 contribute to the NAD(+) site. The active-site N6-AMP-lysine intermediate is the lysine 116. NAD(+) is bound by residues arginine 137, glutamate 171, lysine 286, and lysine 310. 4 residues coordinate Zn(2+): cysteine 404, cysteine 407, cysteine 422, and cysteine 427. The region spanning 588-668 (NSDSIIANKS…FFDLLKSEKG (81 aa)) is the BRCT domain.

The protein belongs to the NAD-dependent DNA ligase family. LigA subfamily. The cofactor is Mg(2+). Mn(2+) serves as cofactor.

The enzyme catalyses NAD(+) + (deoxyribonucleotide)n-3'-hydroxyl + 5'-phospho-(deoxyribonucleotide)m = (deoxyribonucleotide)n+m + AMP + beta-nicotinamide D-nucleotide.. DNA ligase that catalyzes the formation of phosphodiester linkages between 5'-phosphoryl and 3'-hydroxyl groups in double-stranded DNA using NAD as a coenzyme and as the energy source for the reaction. It is essential for DNA replication and repair of damaged DNA. This chain is DNA ligase, found in Mycoplasma mycoides subsp. mycoides SC (strain CCUG 32753 / NCTC 10114 / PG1).